A 269-amino-acid chain; its full sequence is Phosphatidylglycerol--prolipoprotein diacylglyceryl transferase (269 aa).

The next 7 helical transmembrane spans lie at 17–37, 56–76, 92–112, 120–140, 174–194, 202–222, and 237–257; these read LKIH…WLLA, LVFW…VLFY, WKGG…ALWF, FFEL…AGRI, PSQL…LWLY, MAVS…VEFV, and LTMG…LIWL. Arginine 139 is an a 1,2-diacyl-sn-glycero-3-phospho-(1'-sn-glycerol) binding site.

Belongs to the Lgt family.

Its subcellular location is the cell inner membrane. It catalyses the reaction L-cysteinyl-[prolipoprotein] + a 1,2-diacyl-sn-glycero-3-phospho-(1'-sn-glycerol) = an S-1,2-diacyl-sn-glyceryl-L-cysteinyl-[prolipoprotein] + sn-glycerol 1-phosphate + H(+). It functions in the pathway protein modification; lipoprotein biosynthesis (diacylglyceryl transfer). In terms of biological role, catalyzes the transfer of the diacylglyceryl group from phosphatidylglycerol to the sulfhydryl group of the N-terminal cysteine of a prolipoprotein, the first step in the formation of mature lipoproteins. The polypeptide is Phosphatidylglycerol--prolipoprotein diacylglyceryl transferase (Pseudomonas entomophila (strain L48)).